A 260-amino-acid polypeptide reads, in one-letter code: Exosome complex component Rrp4 (260 aa).

The S1 motif domain occupies 59–128; the sequence is NDVVIGIVIV…NSMKVELALR (70 aa). Residues 136–194 enclose the KH domain; sequence KTGQIVEVEPVKVPRVIGHGGSMISMLKKETNCSIFVGQNGRIWIDGKDDDVELLSKAL.

The protein belongs to the RRP4 family. In terms of assembly, component of the archaeal exosome complex. Forms a trimer of Rrp4 and/or Csl4 subunits. The trimer associates with a hexameric ring-like arrangement composed of 3 Rrp41-Rrp42 heterodimers.

The protein resides in the cytoplasm. Non-catalytic component of the exosome, which is a complex involved in RNA degradation. Increases the RNA binding and the efficiency of RNA degradation. Confers strong poly(A) specificity to the exosome. The chain is Exosome complex component Rrp4 from Methanosarcina barkeri (strain Fusaro / DSM 804).